Reading from the N-terminus, the 456-residue chain is Protein translocase subunit SecY (456 aa).

The Cytoplasmic segment spans residues 1-21; sequence MEQLKEKFEPLFSVLPQVKSP. Residues 22–48 form a helical membrane-spanning segment; the sequence is GYRVPFREKLKWTGIILVLYFFLAQIP. Residues 49 to 59 lie on the Extracellular side of the membrane; the sequence is LYGLSANAVDQ. Residues 60-67 constitute an intramembrane region (helical); it reads FAQFRAVL. Residues 60-88 form a discontinuously helical membrane-spanning segment; sequence FAQFRAVLAGNFGSILTLGIGPIVSASII. The stretch at 68 to 79 is an intramembrane region; it reads AGNFGSILTLGI. The segment at residues 80–88 is an intramembrane region (helical); that stretch reads GPIVSASII. Residues 89-109 are Cytoplasmic-facing; that stretch reads LQLLVGGKILKLDLSRHEDKA. A helical membrane pass occupies residues 110–134; sequence FFQGLQKLLAIVFTFFEALIFVLTG. The Extracellular portion of the chain corresponds to 135 to 141; it reads SLAPSAP. Residues 142 to 166 form a helical membrane-spanning segment; that stretch reads QFVWVLILQLTIGGILIIFLDEVVS. At 167–172 the chain is on the cytoplasmic side; it reads KWGFGS. The chain crosses the membrane as a helical span at residues 173–191; sequence GVGLFIAAGVSQEIIVGAF. Residues 192 to 224 are Extracellular-facing; that stretch reads NPLSAPTQPGVPAGRITGFLYLLFTGQSPDFQY. A helical transmembrane segment spans residues 225–246; sequence YVLPVLALIAVFLVVVYAESMR. Residues 247–275 are Cytoplasmic-facing; the sequence is VEIPISMGGGKRLSRGAVGKYPLRFIYAS. Residues 276–297 traverse the membrane as a helical segment; it reads NMPVILTSALLLNVQLLANVFQ. Residues 298 to 334 are Extracellular-facing; that stretch reads KLGYPILGTVSNGQAVDGLAYLLTAPRSIDALILDPF. The chain crosses the membrane as a helical span at residues 335–354; that stretch reads RVVFYAVVFIGLCVLFAWLW. Over 355–397 the chain is Cytoplasmic; it reads VEISNIGPRHVARQLYQMGMQIPGFRSSRGQFEKILKRYIPTI. The helical transmembrane segment at 398–416 threads the bilayer; the sequence is TILGGAFVGLLAFVADLTG. Topologically, residues 417–419 are extracellular; that stretch reads SLG. The chain crosses the membrane as a helical span at residues 420 to 434; the sequence is GGTGVLLTVGIVYRL. Residues 435–456 are Cytoplasmic-facing; sequence YEEIAQEQLMDMHPILRSFLGD.

It belongs to the SecY/SEC61-alpha family. Component of the Sec protein translocase complex. Heterotrimer consisting of alpha (SecY), beta (SecG) and gamma (SecE) subunits. The heterotrimers can form oligomers, although 1 heterotrimer is thought to be able to translocate proteins. Interacts with the ribosome. May interact with SecDF, and other proteins may be involved.

It is found in the cell membrane. In terms of biological role, the central subunit of the protein translocation channel SecYEG. Consists of two halves formed by TMs 1-5 and 6-10. These two domains form a lateral gate at the front which open onto the bilayer between TMs 2 and 7, and are clamped together by SecE at the back. The channel is closed by both a pore ring composed of hydrophobic SecY resides and a short helix (helix 2A) on the extracellular side of the membrane which forms a plug. The plug probably moves laterally to allow the channel to open. The ring and the pore may move independently. The protein is Protein translocase subunit SecY of Methanothermobacter thermautotrophicus (strain ATCC 29096 / DSM 1053 / JCM 10044 / NBRC 100330 / Delta H) (Methanobacterium thermoautotrophicum).